The chain runs to 351 residues: Fe(3+) ions import ATP-binding protein FbpC (351 aa).

Residues 7 to 237 (VELKNVTKRF…PASEFMASFM (231 aa)) enclose the ABC transporter domain. 39 to 46 (GPSGCGKT) contributes to the ATP binding site.

This sequence belongs to the ABC transporter superfamily. Fe(3+) ion importer (TC 3.A.1.10) family. The complex is composed of two ATP-binding proteins (FbpC), two transmembrane proteins (FbpB) and a solute-binding protein (FbpA).

The protein localises to the cell inner membrane. It catalyses the reaction Fe(3+)(out) + ATP + H2O = Fe(3+)(in) + ADP + phosphate + H(+). Its function is as follows. Part of the ABC transporter complex FbpABC involved in Fe(3+) ions import. Responsible for energy coupling to the transport system. This Photorhabdus laumondii subsp. laumondii (strain DSM 15139 / CIP 105565 / TT01) (Photorhabdus luminescens subsp. laumondii) protein is Fe(3+) ions import ATP-binding protein FbpC.